The primary structure comprises 804 residues: Leucine--tRNA ligase (804 aa).

Residues 40 to 51 carry the 'HIGH' region motif; the sequence is PYPSGAGLHVGH. The 'KMSKS' region signature appears at 576 to 580; it reads KMSKS. Lys579 is a binding site for ATP.

This sequence belongs to the class-I aminoacyl-tRNA synthetase family.

It is found in the cytoplasm. It catalyses the reaction tRNA(Leu) + L-leucine + ATP = L-leucyl-tRNA(Leu) + AMP + diphosphate. In Staphylococcus epidermidis (strain ATCC 35984 / DSM 28319 / BCRC 17069 / CCUG 31568 / BM 3577 / RP62A), this protein is Leucine--tRNA ligase.